A 262-amino-acid polypeptide reads, in one-letter code: Phosphonates import ATP-binding protein PhnC 3 (262 aa).

Residues 3 to 245 form the ABC transporter domain; that stretch reads IQLECLSVTY…ELNRIYGNAE (243 aa). 36-43 lines the ATP pocket; it reads GASGSGKS.

It belongs to the ABC transporter superfamily. Phosphonates importer (TC 3.A.1.9.1) family. As to quaternary structure, the complex is composed of two ATP-binding proteins (PhnC), two transmembrane proteins (PhnE) and a solute-binding protein (PhnD).

It is found in the cell inner membrane. It carries out the reaction phosphonate(out) + ATP + H2O = phosphonate(in) + ADP + phosphate + H(+). Its function is as follows. Part of the ABC transporter complex PhnCDE involved in phosphonates import. Responsible for energy coupling to the transport system. The sequence is that of Phosphonates import ATP-binding protein PhnC 3 from Nostoc sp. (strain PCC 7120 / SAG 25.82 / UTEX 2576).